The sequence spans 63 residues: Synergistic-type venom protein C9S3, chain 1 (63 aa).

Disulfide bonds link cysteine 3/cysteine 24, cysteine 17/cysteine 42, and cysteine 46/cysteine 57.

The protein belongs to the three-finger toxin family. Short-chain subfamily. Aminergic toxin sub-subfamily. In terms of assembly, heterodimer of C9S3 chain 1 and chain 2 (AC P01409); disulfide-linked. As to expression, expressed by the venom gland.

The protein localises to the secreted. Its function is as follows. This protein shows a synergetic toxic effect in that it enhances the toxicity of other toxins. The protein is Synergistic-type venom protein C9S3, chain 1 of Dendroaspis angusticeps (Eastern green mamba).